Reading from the N-terminus, the 226-residue chain is Phosphoglycolate phosphatase (226 aa).

The active-site Nucleophile is the aspartate 5. Mg(2+)-binding residues include aspartate 5 and aspartate 7. Residue lysine 142 coordinates substrate. Positions 164 and 168 each coordinate Mg(2+).

The protein belongs to the archaeal SPP-like hydrolase family. The cofactor is Mg(2+).

The enzyme catalyses 2-phosphoglycolate + H2O = glycolate + phosphate. Functionally, catalyzes the dephosphorylation of 2-phosphoglycolate. This Sulfurisphaera tokodaii (strain DSM 16993 / JCM 10545 / NBRC 100140 / 7) (Sulfolobus tokodaii) protein is Phosphoglycolate phosphatase.